The primary structure comprises 301 residues: Protoheme IX farnesyltransferase 1 (301 aa).

Transmembrane regions (helical) follow at residues Val29–Val49, Val51–Leu71, Ala101–Asn121, Leu123–Leu143, Asn150–Thr170, Ala177–Ile197, Cys223–Met243, Cys244–Trp264, and Ala275–Leu295.

It belongs to the UbiA prenyltransferase family. Protoheme IX farnesyltransferase subfamily.

It is found in the cell inner membrane. It carries out the reaction heme b + (2E,6E)-farnesyl diphosphate + H2O = Fe(II)-heme o + diphosphate. It participates in porphyrin-containing compound metabolism; heme O biosynthesis; heme O from protoheme: step 1/1. In terms of biological role, converts heme B (protoheme IX) to heme O by substitution of the vinyl group on carbon 2 of heme B porphyrin ring with a hydroxyethyl farnesyl side group. The chain is Protoheme IX farnesyltransferase 1 from Shewanella baltica (strain OS185).